The chain runs to 131 residues: Small ribosomal subunit protein eS8 (131 aa).

The segment at 11-36 is disordered; the sequence is DLKKPSGGKKGRVRKTKKKALCGGPP. A compositionally biased stretch (basic residues) spans 16–30; it reads SGGKKGRVRKTKKKA.

This sequence belongs to the eukaryotic ribosomal protein eS8 family. In terms of assembly, part of the 30S ribosomal subunit.

This is Small ribosomal subunit protein eS8 from Pyrobaculum islandicum (strain DSM 4184 / JCM 9189 / GEO3).